We begin with the raw amino-acid sequence, 282 residues long: Undecaprenyl-diphosphatase (282 aa).

The next 5 helical transmembrane spans lie at tyrosine 90–phenylalanine 110, leucine 121–valine 141, phenylalanine 194–alanine 214, glutamine 228–leucine 248, and methionine 256–threonine 276.

This sequence belongs to the UppP family.

Its subcellular location is the cell membrane. It carries out the reaction di-trans,octa-cis-undecaprenyl diphosphate + H2O = di-trans,octa-cis-undecaprenyl phosphate + phosphate + H(+). In terms of biological role, catalyzes the dephosphorylation of undecaprenyl diphosphate (UPP). Confers resistance to bacitracin. The polypeptide is Undecaprenyl-diphosphatase (Mycobacterium tuberculosis (strain ATCC 25618 / H37Rv)).